The primary structure comprises 176 residues: Large ribosomal subunit protein uL10 (176 aa).

It belongs to the universal ribosomal protein uL10 family. As to quaternary structure, part of the ribosomal stalk of the 50S ribosomal subunit. The N-terminus interacts with L11 and the large rRNA to form the base of the stalk. The C-terminus forms an elongated spine to which L12 dimers bind in a sequential fashion forming a multimeric L10(L12)X complex.

Its function is as follows. Forms part of the ribosomal stalk, playing a central role in the interaction of the ribosome with GTP-bound translation factors. This chain is Large ribosomal subunit protein uL10, found in Hahella chejuensis (strain KCTC 2396).